A 200-amino-acid polypeptide reads, in one-letter code: Glycerol-3-phosphate acyltransferase (200 aa).

5 helical membrane-spanning segments follow: residues 8 to 28 (ALALWGVIGYLLGSIPFGMVL), 57 to 77 (LAAALTLVLDGGKGVVAVLAA), 88 to 108 (IAGLMAMIGHCYPVWLRFAGG), 114 to 134 (FLGIVLALAFPVGVGCCLAWL), and 159 to 179 (FLLGFPGAVVLLILLGALIFW).

Belongs to the PlsY family. In terms of assembly, probably interacts with PlsX.

The protein localises to the cell inner membrane. It carries out the reaction an acyl phosphate + sn-glycerol 3-phosphate = a 1-acyl-sn-glycero-3-phosphate + phosphate. It participates in lipid metabolism; phospholipid metabolism. Catalyzes the transfer of an acyl group from acyl-phosphate (acyl-PO(4)) to glycerol-3-phosphate (G3P) to form lysophosphatidic acid (LPA). This enzyme utilizes acyl-phosphate as fatty acyl donor, but not acyl-CoA or acyl-ACP. The sequence is that of Glycerol-3-phosphate acyltransferase from Roseobacter denitrificans (strain ATCC 33942 / OCh 114) (Erythrobacter sp. (strain OCh 114)).